A 250-amino-acid chain; its full sequence is Probable transcriptional regulatory protein Cphamn1_0542 (250 aa).

It belongs to the TACO1 family.

It localises to the cytoplasm. The protein is Probable transcriptional regulatory protein Cphamn1_0542 of Chlorobium phaeobacteroides (strain BS1).